A 388-amino-acid polypeptide reads, in one-letter code: MGILGLSKLIADLAPQAIRESEIKNFFGRKVAIDASMCLYQFLIAVRSEGAQLATVNGDPTSHLMGMFYRTIRLLDNGIKPVYVFDGKPPDLKSGELAKRAERREEAEKALKAATEAGDDAEIEKFNRRLVRVTKEHAREAKELLKLMGVPYVEAPCEAEAQCAALVKAGKVYATATEDMDALTFGSTKLLRYLTYSEARKMPVKEFSYEKLLDGLGVNNREFIDLCILLGCDYCESIKGIGPKRAIELINNYRDIETILDNLDTSKYTVPENWNYKIARELFIEPEVANADAIELKWTEPDEEGLVKFLCGDRQFNEDRVRSGAKKLLKSKQSQTQVRLDSFFKTLPSTPSATNAAKRKAEEAKKSANNKKAKTSGGGGGGRGRRPK.

The N-domain stretch occupies residues 1–104 (MGILGLSKLI…GELAKRAERR (104 aa)). D34 provides a ligand contact to Mg(2+). The DNA site is built by R47 and R70. Mg(2+) contacts are provided by D86, E158, E160, D179, and D181. The I-domain stretch occupies residues 122–253 (EIEKFNRRLV…KRAIELINNY (132 aa)). E158 lines the DNA pocket. DNA contacts are provided by G231 and D233. D233 is a Mg(2+) binding site. Residues 336–344 (TQVRLDSFF) are interaction with PCNA. Residues 343-388 (FFKTLPSTPSATNAAKRKAEEAKKSANNKKAKTSGGGGGGRGRRPK) are disordered.

The protein belongs to the XPG/RAD2 endonuclease family. FEN1 subfamily. In terms of assembly, interacts with PCNA. Three molecules of FEN1 bind to one PCNA trimer with each molecule binding to one PCNA monomer. PCNA stimulates the nuclease activity without altering cleavage specificity. Mg(2+) is required as a cofactor. Post-translationally, phosphorylated. Phosphorylation upon DNA damage induces relocalization to the nuclear plasma.

It is found in the nucleus. The protein localises to the nucleolus. The protein resides in the nucleoplasm. It localises to the mitochondrion. In terms of biological role, structure-specific nuclease with 5'-flap endonuclease and 5'-3' exonuclease activities involved in DNA replication and repair. During DNA replication, cleaves the 5'-overhanging flap structure that is generated by displacement synthesis when DNA polymerase encounters the 5'-end of a downstream Okazaki fragment. It enters the flap from the 5'-end and then tracks to cleave the flap base, leaving a nick for ligation. Also involved in the long patch base excision repair (LP-BER) pathway, by cleaving within the apurinic/apyrimidinic (AP) site-terminated flap. Acts as a genome stabilization factor that prevents flaps from equilibrating into structures that lead to duplications and deletions. Also possesses 5'-3' exonuclease activity on nicked or gapped double-stranded DNA, and exhibits RNase H activity. Also involved in replication and repair of rDNA and in repairing mitochondrial DNA. The polypeptide is Flap endonuclease 1 (Drosophila ananassae (Fruit fly)).